The sequence spans 365 residues: Heterogeneous nuclear ribonucleoproteins A1 homolog (365 aa).

Residues 4–94 (SEAPNEPEQL…EPKRAVSRED (91 aa)) are globular A domain. RRM domains lie at 14 to 97 (RKLF…DSSR) and 105 to 184 (KKIF…LSKQ). The interval 95–185 (SSRPGAHLTV…QVRKALSKQE (91 aa)) is globular B domain. Disordered regions lie at residues 175-208 (SQVR…RGGF) and 328-365 (GPMK…GRRF). 2 stretches are compositionally biased toward gly residues: residues 198–208 (GSGNYGSRGGF) and 330–365 (MKGG…GRRF). Residues 321–359 (SQSSSNFGPMKGGNYGGGRNSGPYGGGYGGGSASSSSGY) form a nuclear targeting sequence region.

It is found in the nucleus. It localises to the cytoplasm. In terms of biological role, this protein is a component of ribonucleosomes. The protein is Heterogeneous nuclear ribonucleoproteins A1 homolog (hnrnpa1) of Xenopus laevis (African clawed frog).